A 314-amino-acid polypeptide reads, in one-letter code: L-lactate dehydrogenase 2 (314 aa).

Residues Val-16, Asp-37, Lys-42, Tyr-68, and 82 to 83 each bind NAD(+); that span reads GL. Residues Gln-85, Arg-91, and 123-126 each bind substrate; that span reads NPVD. NAD(+)-binding positions include 121-123 and Ser-146; that span reads ATN. 151–154 contributes to the substrate binding site; it reads DSAR. The beta-D-fructose 1,6-bisphosphate site is built by Arg-156 and His-171. Catalysis depends on His-178, which acts as the Proton acceptor. Tyr-223 bears the Phosphotyrosine mark. Position 232 (Thr-232) interacts with substrate.

It belongs to the LDH/MDH superfamily. LDH family. As to quaternary structure, homotetramer.

Its subcellular location is the cytoplasm. The catalysed reaction is (S)-lactate + NAD(+) = pyruvate + NADH + H(+). It functions in the pathway fermentation; pyruvate fermentation to lactate; (S)-lactate from pyruvate: step 1/1. With respect to regulation, allosterically activated by fructose 1,6-bisphosphate (FBP). In terms of biological role, catalyzes the conversion of lactate to pyruvate. This chain is L-lactate dehydrogenase 2, found in Bacillus cereus (strain ATCC 14579 / DSM 31 / CCUG 7414 / JCM 2152 / NBRC 15305 / NCIMB 9373 / NCTC 2599 / NRRL B-3711).